Consider the following 488-residue polypeptide: Dipeptide and tripeptide permease A (488 aa).

At Met-1–Arg-35 the chain is on the cytoplasmic side. Residues Phe-36 to Ser-56 traverse the membrane as a helical segment. The Periplasmic portion of the chain corresponds to Glu-57–Ala-60. A helical transmembrane segment spans residues Ile-61–Leu-81. Over Gly-82–Arg-90 the chain is Cytoplasmic. Residues Val-91 to His-111 traverse the membrane as a helical segment. At Asp-112–Asp-114 the chain is on the periplasmic side. Residues Met-115 to Ser-135 traverse the membrane as a helical segment. The Cytoplasmic portion of the chain corresponds to Ser-136–Thr-154. The helical transmembrane segment at Met-155 to Ala-175 threads the bilayer. The Periplasmic segment spans residues Ala-176–Gly-179. A helical transmembrane segment spans residues Trp-180–Leu-200. The Cytoplasmic segment spans residues Cys-201 to Tyr-219. A helical membrane pass occupies residues Leu-220–Leu-240. Residue His-241 is a topological domain, periplasmic. A helical transmembrane segment spans residues Asn-242–Ala-262. At Arg-263–Lys-275 the chain is on the cytoplasmic side. A helical transmembrane segment spans residues Met-276 to Met-296. The Periplasmic segment spans residues Pro-297–Ser-324. A helical membrane pass occupies residues Leu-325–Gly-345. Residues Asp-346–Lys-353 lie on the Cytoplasmic side of the membrane. A helical transmembrane segment spans residues Phe-354–Met-374. Residues Ala-375–Gly-391 lie on the Periplasmic side of the membrane. A helical transmembrane segment spans residues Phe-392 to Val-412. Topologically, residues Pro-413–Arg-415 are cytoplasmic. The helical transmembrane segment at Leu-416–Gly-436 threads the bilayer. Topologically, residues Lys-437–Ser-460 are periplasmic. Residues Val-461–Pro-481 form a helical membrane-spanning segment. Topologically, residues Met-482–Gln-488 are cytoplasmic.

Belongs to the major facilitator superfamily. Proton-dependent oligopeptide transporter (POT/PTR) (TC 2.A.17) family. DtpA subfamily.

The protein localises to the cell inner membrane. Functionally, proton-dependent permease that transports di- and tripeptides. The sequence is that of Dipeptide and tripeptide permease A from Proteus mirabilis (strain HI4320).